A 55-amino-acid chain; its full sequence is Metallothionein-3 (55 aa).

This sequence belongs to the metallothionein superfamily. Type 11 family.

In Yarrowia lipolytica (strain CLIB 122 / E 150) (Yeast), this protein is Metallothionein-3 (MTP3).